We begin with the raw amino-acid sequence, 264 residues long: Thymidylate synthase (264 aa).

R21 lines the dUMP pocket. A (6R)-5,10-methylene-5,6,7,8-tetrahydrofolate-binding site is contributed by H51. 126–127 (RR) contacts dUMP. The Nucleophile role is filled by C146. Residues 166–169 (RSAD), N177, and 207–209 (HIY) each bind dUMP. D169 contributes to the (6R)-5,10-methylene-5,6,7,8-tetrahydrofolate binding site. A263 serves as a coordination point for (6R)-5,10-methylene-5,6,7,8-tetrahydrofolate.

Belongs to the thymidylate synthase family. Bacterial-type ThyA subfamily. As to quaternary structure, homodimer.

The protein resides in the cytoplasm. It carries out the reaction dUMP + (6R)-5,10-methylene-5,6,7,8-tetrahydrofolate = 7,8-dihydrofolate + dTMP. The protein operates within pyrimidine metabolism; dTTP biosynthesis. In terms of biological role, catalyzes the reductive methylation of 2'-deoxyuridine-5'-monophosphate (dUMP) to 2'-deoxythymidine-5'-monophosphate (dTMP) while utilizing 5,10-methylenetetrahydrofolate (mTHF) as the methyl donor and reductant in the reaction, yielding dihydrofolate (DHF) as a by-product. This enzymatic reaction provides an intracellular de novo source of dTMP, an essential precursor for DNA biosynthesis. This chain is Thymidylate synthase, found in Methylobacillus flagellatus (strain ATCC 51484 / DSM 6875 / VKM B-1610 / KT).